We begin with the raw amino-acid sequence, 81 residues long: Acyl carrier protein (81 aa).

Residues 5-80 (EEIFSKVKSI…DIVSYIEKKL (76 aa)) enclose the Carrier domain. Residue Ser40 is modified to O-(pantetheine 4'-phosphoryl)serine.

This sequence belongs to the acyl carrier protein (ACP) family. 4'-phosphopantetheine is transferred from CoA to a specific serine of apo-ACP by AcpS. This modification is essential for activity because fatty acids are bound in thioester linkage to the sulfhydryl of the prosthetic group.

It localises to the cytoplasm. Its pathway is lipid metabolism; fatty acid biosynthesis. Its function is as follows. Carrier of the growing fatty acid chain in fatty acid biosynthesis. This is Acyl carrier protein from Thermotoga maritima (strain ATCC 43589 / DSM 3109 / JCM 10099 / NBRC 100826 / MSB8).